The chain runs to 1583 residues: Dynamin-binding protein (1583 aa).

Met1 bears the N-acetylmethionine mark. 4 consecutive SH3 domains span residues 2 to 61 (EAGS…IVTI), 66 to 126 (EGER…ELCL), 145 to 204 (YSMG…LLGP), and 243 to 302 (QPGT…LFSK). 3 disordered regions span residues 217-244 (HNDC…EEQP), 306-329 (EETM…DCRE), and 366-464 (ECEV…RGMY). Over residues 224 to 243 (GEEETPTGEEERGPEEDEEQ) the composition is skewed to acidic residues. A compositionally biased stretch (basic and acidic residues) spans 366–379 (ECEVHKSSHQDEGT). The segment covering 406–442 (ETINGVSSQSQVPFRPRWQQNQYYSTTGRGHLSTEQY) has biased composition (polar residues). Ser495 bears the Phosphoserine mark. Disordered regions lie at residues 594–656 (RGSS…PSAQ) and 671–693 (LFTH…QTLD). Residues 637–653 (PEPPLAMRPSRPAPLPP) are compositionally biased toward pro residues. The span at 675-685 (ESCESPEKEGP) shows a compositional bias: basic and acidic residues. Residues 742 to 762 (LEFYESNIESLNMELQQLREM) adopt a coiled-coil conformation. Positions 791-974 (KRAKVIEELL…KEINVNINEY (184 aa)) constitute a DH domain. Positions 1015–1224 (LKHLTGFAPQ…LKVAGREGNL (210 aa)) constitute a BAR domain. Residues 1292–1355 (PPEKLFQAER…YSSFLKPYNT (64 aa)) form the SH3 5 domain. Residues 1357–1496 (RSHSDVSVGS…GRNGQGKDLT (140 aa)) are disordered. Residues 1361-1387 (DVSVGSHSSTESEQSSSSPRFPRQNSS) show a composition bias toward low complexity. Residues 1388–1414 (GTLTFNPGSMAVSFTSGSCQKQPQDAT) are compositionally biased toward polar residues. The span at 1433–1456 (SESSPSRCPSDPDSSPQPRSWDSP) shows a compositional bias: low complexity. An SH3 6 domain is found at 1519-1582 (EGNQVYFAVY…PSNYIRKAEY (64 aa)).

Binds DNM1 via its N-terminal SH3 domains. The C-terminal SH3 domain binds a complex containing actin, tubulin, Hsp70 and actin-regulatory proteins, such as ENAH, EVL, WIRE, CR16, WAVE1 and NAP1L1. Interacts with FASLG. Interacts (via SH3 domain 6) with WASL. Interacts (via SH3 domain 6) interacts with ENAH. Interacts (via C-terminal domain) with TJP1; required for the apical cell-cell junction localization of DNMBP.

Its subcellular location is the cytoplasm. The protein localises to the golgi apparatus. It is found in the golgi stack. The protein resides in the cytoskeleton. It localises to the synapse. Its subcellular location is the cell junction. Plays a critical role as a guanine nucleotide exchange factor (GEF) for CDC42 in several intracellular processes associated with the actin and microtubule cytoskeleton. Regulates the structure of apical junctions in epithelial cells. Participates in the normal lumenogenesis of epithelial cell cysts by regulating spindle orientation. Plays a key role in ciliogenesis and cyst formation. May play a role in membrane trafficking between the cell surface and the Golgi. This is Dynamin-binding protein from Canis lupus familiaris (Dog).